Reading from the N-terminus, the 493-residue chain is Occludin (493 aa).

The Cytoplasmic portion of the chain corresponds to 1 to 47 (MYSRPSNYAPSKDVYGGEMRSQPAYSYYPEEEIQHFYRWSSPPGIIK). Positions 41-250 (SPPGIIKIMS…IIFFAVKTRK (210 aa)) constitute an MARVEL domain. The helical transmembrane segment at 48–70 (IMSILIVVMCVGIFACVASTLPW) threads the bilayer. The Extracellular segment spans residues 71–116 (DLDITGQSMGYGMGSGSYSGGYTGYGFGGSQMGLGFAYGGNYTDPR). Residues 117 to 141 (AAKGFILAMAAFCFIIGLVIFVMLV) form a helical membrane-spanning segment. The Cytoplasmic segment spans residues 142–151 (TRTPLSTSRK). The helical transmembrane segment at 152–176 (FYLIVIIVSAIIGGLVFIATIVYTV) threads the bilayer. Residues 177 to 224 (GVNPVAQASGSAFYTQIVSICNQFYSPVQTGVFVNQYLYHYCVVEPQE) lie on the Extracellular side of the membrane. Residues C197 and C218 are joined by a disulfide bond. A helical transmembrane segment spans residues 225–246 (AIAIVLGFLIVVAFAIIIFFAV). Over 247–493 (KTRKKINQYG…IKQMVSNYDK (247 aa)) the chain is Cytoplasmic. The tract at residues 334–407 (YGMSPRHYSS…TKQRQEYKQE (74 aa)) is disordered. The span at 352-361 (APPKKRPGKP) shows a compositional bias: basic residues. The residue at position 375 (T375) is a Phosphothreonine; by CK2; in vitro. At S379 the chain carries Phosphoserine; by CK2; in vitro. Residues 379–389 (SADELEDDSWD) show a composition bias toward acidic residues. In terms of domain architecture, OCEL spans 386-493 (DSWDSEYPPI…IKQMVSNYDK (108 aa)). Residues 396–428 (TQTKQRQEYKQEFASDLHEYKRLQAELDELSKI) adopt a coiled-coil conformation.

The protein belongs to the ELL/occludin family. As to quaternary structure, interacts in vitro with cingulin, possibly directly. Interacts with ZO-1. In terms of processing, phosphorylated. In terms of tissue distribution, localized at tight junctions of both epithelial and endothelial cells.

It is found in the cell membrane. The protein localises to the cell junction. The protein resides in the tight junction. In terms of biological role, probably plays a role in the formation and regulation of the tight junction (TJ) paracellular permeability barrier. The polypeptide is Occludin (ocln) (Xenopus laevis (African clawed frog)).